We begin with the raw amino-acid sequence, 216 residues long: ATP phosphoribosyltransferase (216 aa).

Belongs to the ATP phosphoribosyltransferase family. Short subfamily. Heteromultimer composed of HisG and HisZ subunits.

The protein resides in the cytoplasm. The catalysed reaction is 1-(5-phospho-beta-D-ribosyl)-ATP + diphosphate = 5-phospho-alpha-D-ribose 1-diphosphate + ATP. It participates in amino-acid biosynthesis; L-histidine biosynthesis; L-histidine from 5-phospho-alpha-D-ribose 1-diphosphate: step 1/9. In terms of biological role, catalyzes the condensation of ATP and 5-phosphoribose 1-diphosphate to form N'-(5'-phosphoribosyl)-ATP (PR-ATP). Has a crucial role in the pathway because the rate of histidine biosynthesis seems to be controlled primarily by regulation of HisG enzymatic activity. The polypeptide is ATP phosphoribosyltransferase (Thiobacillus denitrificans (strain ATCC 25259 / T1)).